The following is a 349-amino-acid chain: DNA polymerase IV (349 aa).

The 182-residue stretch at 4–185 (IIHIDCDCFY…LPVAKLHGVG (182 aa)) folds into the UmuC domain. 2 residues coordinate Mg(2+): Asp-8 and Asp-103. Glu-104 is a catalytic residue.

The protein belongs to the DNA polymerase type-Y family. As to quaternary structure, monomer. It depends on Mg(2+) as a cofactor.

The protein localises to the cytoplasm. The enzyme catalyses DNA(n) + a 2'-deoxyribonucleoside 5'-triphosphate = DNA(n+1) + diphosphate. In terms of biological role, poorly processive, error-prone DNA polymerase involved in untargeted mutagenesis. Copies undamaged DNA at stalled replication forks, which arise in vivo from mismatched or misaligned primer ends. These misaligned primers can be extended by PolIV. Exhibits no 3'-5' exonuclease (proofreading) activity. May be involved in translesional synthesis, in conjunction with the beta clamp from PolIII. This chain is DNA polymerase IV, found in Pseudomonas aeruginosa (strain UCBPP-PA14).